A 472-amino-acid polypeptide reads, in one-letter code: UDP-glucosyltransferase 103 (472 aa).

H15 acts as the Proton acceptor in catalysis. H15 is an an anthocyanidin binding site. The Charge relay role is filled by D117. The UDP-alpha-D-glucose site is built by A344, Q346, H361, W364, N365, S366, and E369. G384 is a binding site for an anthocyanidin. Positions 385 and 386 each coordinate UDP-alpha-D-glucose.

It belongs to the UDP-glycosyltransferase family.

It catalyses the reaction (20S)-ginsenoside F1 + UDP-alpha-D-glucose = (20S)-ginsenoside Rg1 + UDP + H(+). It participates in secondary metabolite biosynthesis; terpenoid biosynthesis. In terms of biological role, probable component of the triterpene saponins (e.g. ginsenosides) biosynthetic pathway. No detectable activity toward protopanaxatriol (PPT). This chain is UDP-glucosyltransferase 103, found in Panax ginseng (Korean ginseng).